The primary structure comprises 776 residues: MTAETRILELRAELDQHNYRYYVLDEPSVPDAEYDRLFNELKALEAEHPHLVTPDSPTQRVGGAALAAFSQVRHEVPMLSLGNAFEEADLREFGRRVVEGLDQPGAVDYSCEPKLDGLAVSLLYRDGQLVQGATRGDGTTGEDISANVRTVRNIPLKLQGKGWPAVLEVRGEVYMSKAGFDRLNAAQAEAGGKTFANPRNAAAGSLRQLDSKITASRPLEFCCYGVGQVSESIGDSHIGILEQLKAWGLPISRELKHAAGIEECLAYYRDIGERRNSLPYEIDGVVFKVNSLAAQRELGFRAREPRWAIAHKFPAMEELTEVLDVEFQVGRTGAVTPVARLKPVKVAGVTVSNATLHNMDEIARLGLRIGDTVIIRRAGDVIPQVMQVVLERRPQGARPVEVPSACPVCGSQVERTRLVKRSKGKETTSEGAVYRCVGRLACGAQLKQAIIHYVSRRAMDIDGLGEKSVEQLVDEGLIGSPADLYKLQFEQVVGLEGFAEVSTQKLLDAIEASKRPSLARFIYALGIPDVGEETAKVLARSLGSLARVQQALPQVLTYLPDIGLEVAYEIHNFFEDEHNQKVIQQLLDSGMQLQDEGELAAEFAASTTLAGMIAKLDIASVGPTGAEKLVARLDSLDKIIAADGIDLRQALAAKQADAVREFFKDEANQKLARDIEAQLLAFGMHWSSEKKVAEGLPLAGQTWVLTGTLERMSRDIAKDKLESLGAKVAGSVSGKTHCVVAGPGAGSKLAKAAELGVKVLDEDAFVTFLAEQGIAV.

NAD(+)-binding positions include 31 to 35 (DAEYD), 80 to 81 (SL), and E112. The active-site N6-AMP-lysine intermediate is the K114. NAD(+) is bound by residues R135, E172, K288, and K312. Positions 406, 409, 436, and 442 each coordinate Zn(2+). One can recognise a BRCT domain in the interval 693–776 (AEGLPLAGQT…TFLAEQGIAV (84 aa)).

It belongs to the NAD-dependent DNA ligase family. LigA subfamily. It depends on Mg(2+) as a cofactor. The cofactor is Mn(2+).

The catalysed reaction is NAD(+) + (deoxyribonucleotide)n-3'-hydroxyl + 5'-phospho-(deoxyribonucleotide)m = (deoxyribonucleotide)n+m + AMP + beta-nicotinamide D-nucleotide.. Functionally, DNA ligase that catalyzes the formation of phosphodiester linkages between 5'-phosphoryl and 3'-hydroxyl groups in double-stranded DNA using NAD as a coenzyme and as the energy source for the reaction. It is essential for DNA replication and repair of damaged DNA. The chain is DNA ligase from Pseudomonas putida (strain ATCC 47054 / DSM 6125 / CFBP 8728 / NCIMB 11950 / KT2440).